A 370-amino-acid chain; its full sequence is Histidinol-phosphate aminotransferase (370 aa).

Lys230 carries the N6-(pyridoxal phosphate)lysine modification.

It belongs to the class-II pyridoxal-phosphate-dependent aminotransferase family. Histidinol-phosphate aminotransferase subfamily. As to quaternary structure, homodimer. Pyridoxal 5'-phosphate serves as cofactor.

The enzyme catalyses L-histidinol phosphate + 2-oxoglutarate = 3-(imidazol-4-yl)-2-oxopropyl phosphate + L-glutamate. Its pathway is amino-acid biosynthesis; L-histidine biosynthesis; L-histidine from 5-phospho-alpha-D-ribose 1-diphosphate: step 7/9. The chain is Histidinol-phosphate aminotransferase from Leptospira interrogans serogroup Icterohaemorrhagiae serovar Lai (strain 56601).